Here is a 604-residue protein sequence, read N- to C-terminus: Pescadillo homolog (604 aa).

The tract at residues 275–299 is disordered; the sequence is NSEPAGLIEDKEGEDNKESSKTDES. Residues 282–299 are compositionally biased toward basic and acidic residues; sequence IEDKEGEDNKESSKTDES. Residues 337–427 form the BRCT domain; the sequence is ECRSLFKNLK…IILPTEGYIV (91 aa). Disordered stretches follow at residues 518–557 and 574–604; these read KTFS…DAAD and IEIN…AKGR. 2 stretches are compositionally biased toward basic and acidic residues: residues 531 to 557 and 577 to 586; these read VVDK…DAAD and NQERKKDKVN.

The protein belongs to the pescadillo family.

The protein resides in the nucleus. The protein localises to the nucleolus. Its subcellular location is the nucleoplasm. Functionally, required for maturation of ribosomal RNAs and formation of the large ribosomal subunit. This Oryza sativa subsp. japonica (Rice) protein is Pescadillo homolog (PES).